The following is a 259-amino-acid chain: MTDPVSRQPTLVIKVGGNELDDATFVKELARIVAAMRPIPTLVHGGGKEIGVLQETLGSAPRFVGGLRYTDATALTAAEMVLCGSVSTRLVAALIVAGADALGISGVDRGLIRVVKQEHPAGDLGRVGRPTAVRSEVLHELLNHDVIPVIAPIALGFDGPYNVNADEAAGAIAAALGADEVVFVTNVPGVLVNGDVMPRLTRHEIEHLIADGTISGGMIPKVRAALTALDAGVRAARITNLEGMLEHGTIIIAEGEVHE.

Substrate is bound by residues 46–47, R68, and N162; that span reads GG.

The protein belongs to the acetylglutamate kinase family. ArgB subfamily.

Its subcellular location is the cytoplasm. It catalyses the reaction N-acetyl-L-glutamate + ATP = N-acetyl-L-glutamyl 5-phosphate + ADP. It participates in amino-acid biosynthesis; L-arginine biosynthesis; N(2)-acetyl-L-ornithine from L-glutamate: step 2/4. Functionally, catalyzes the ATP-dependent phosphorylation of N-acetyl-L-glutamate. The chain is Acetylglutamate kinase from Roseiflexus castenholzii (strain DSM 13941 / HLO8).